The primary structure comprises 454 residues: CCA-adding enzyme (454 aa).

The ATP site is built by Ser53 and Lys56. 2 residues coordinate CTP: Ser53 and Lys56. Mg(2+) contacts are provided by Asp65, Asp67, and Asp119. ATP is bound by residues His142, Lys161, and Tyr170. Residues His142, Lys161, and Tyr170 each contribute to the CTP site.

This sequence belongs to the tRNA nucleotidyltransferase/poly(A) polymerase family. Archaeal CCA-adding enzyme subfamily. In terms of assembly, homodimer. Mg(2+) is required as a cofactor.

It catalyses the reaction a tRNA precursor + 2 CTP + ATP = a tRNA with a 3' CCA end + 3 diphosphate. The enzyme catalyses a tRNA with a 3' CCA end + 2 CTP + ATP = a tRNA with a 3' CCACCA end + 3 diphosphate. Functionally, catalyzes the addition and repair of the essential 3'-terminal CCA sequence in tRNAs without using a nucleic acid template. Adds these three nucleotides in the order of C, C, and A to the tRNA nucleotide-73, using CTP and ATP as substrates and producing inorganic pyrophosphate. tRNA 3'-terminal CCA addition is required both for tRNA processing and repair. Also involved in tRNA surveillance by mediating tandem CCA addition to generate a CCACCA at the 3' terminus of unstable tRNAs. While stable tRNAs receive only 3'-terminal CCA, unstable tRNAs are marked with CCACCA and rapidly degraded. In Thermococcus gammatolerans (strain DSM 15229 / JCM 11827 / EJ3), this protein is CCA-adding enzyme.